A 252-amino-acid polypeptide reads, in one-letter code: E3 ubiquitin-protein ligase MARCHF3 (252 aa).

An RING-CH-type zinc finger spans residues 62–122 (SSFNDHPMCR…ELCHFRFSVE (61 aa)). 8 residues coordinate Zn(2+): Cys70, Cys73, Cys86, Cys88, His96, Cys99, Cys112, and Cys115. A run of 2 helical transmembrane segments spans residues 144–164 (LFGDMVCFLFITPLATISGWL) and 181–201 (AVGLIALTVALFTIYLFWTLV).

The protein localises to the cytoplasmic vesicle membrane. It is found in the early endosome membrane. It carries out the reaction S-ubiquitinyl-[E2 ubiquitin-conjugating enzyme]-L-cysteine + [acceptor protein]-L-lysine = [E2 ubiquitin-conjugating enzyme]-L-cysteine + N(6)-ubiquitinyl-[acceptor protein]-L-lysine.. It participates in protein modification; protein ubiquitination. E3 ubiquitin-protein ligase which may be involved in endosomal trafficking. E3 ubiquitin ligases accept ubiquitin from an E2 ubiquitin-conjugating enzyme in the form of a thioester and then directly transfer the ubiquitin to targeted substrates. This chain is E3 ubiquitin-protein ligase MARCHF3 (marchf3), found in Xenopus laevis (African clawed frog).